Reading from the N-terminus, the 992-residue chain is Disks large-associated protein 4 (992 aa).

Positions 1 to 20 are enriched in basic and acidic residues; that stretch reads MKGLGDSRPRHLSDSLDPPH. 3 disordered regions span residues 1 to 30, 47 to 66, and 157 to 206; these read MKGLGDSRPRHLSDSLDPPHEPLFAGTDRN, PGQNTLPGDGLFPLNNQLPP, and LEGT…GWWS. Positions 162–171 are enriched in gly residues; that stretch reads GKVGGNGSKK. The segment covering 172–194 has biased composition (basic and acidic residues); that stretch reads GGMEDGKGRRAKSKERAKAGEPK. A phosphoserine mark is found at Ser-206 and Ser-207. An Omega-N-methylarginine modification is found at Arg-291. The segment at 342–396 is disordered; it reads STTLLSPRETDAAAEGPIPCRRMRSGSYIKAMGDEDSDESGGSPKPSPKTAARRQ. Ser-378, Ser-381, Ser-388, Ser-405, Ser-415, and Ser-421 each carry phosphoserine. 3 disordered regions span residues 527 to 751, 763 to 798, and 915 to 992; these read SVSL…GPRQ, SYGDNSDPALEASSLPPPDPWLETSSSSPAEPAQPG, and TPEK…QTRL. Residues 528–554 are compositionally biased toward low complexity; it reads VSLQSLSPPPSTGSLSNSRTLPSSSCL. The segment covering 576–591 has biased composition (polar residues); it reads VTVQSSTESAQDTYLD. Phosphoserine occurs at positions 580, 581, 609, 611, 665, and 744. The segment covering 600–620 has biased composition (low complexity); the sequence is TSQSGLSNSSDSLDSSTRPPS. The residue at position 915 (Thr-915) is a Phosphothreonine. Basic and acidic residues-rich tracts occupy residues 915–925 and 940–958; these read TPEKRKEEKKP and VSRDKASDASDKQRQEARK. Residues 969–978 show a composition bias toward polar residues; it reads VRQNSATESA. Phosphoserine is present on Ser-973.

It belongs to the SAPAP family. Interacts with DLG1 and DLG4/PSD-95.

The protein localises to the membrane. Its function is as follows. May play a role in the molecular organization of synapses and neuronal cell signaling. Could be an adapter protein linking ion channel to the subsynaptic cytoskeleton. May induce enrichment of PSD-95/SAP90 at the plasma membrane. This chain is Disks large-associated protein 4 (DLGAP4), found in Homo sapiens (Human).